The primary structure comprises 289 residues: Probable protein phosphatase 2C 39 (289 aa).

Residues 41–288 (THGFHLVKGK…DDISVVVVKF (248 aa)) form the PPM-type phosphatase domain. Residues Asp78, Gly79, Asp240, and Asp279 each contribute to the Mn(2+) site.

The protein belongs to the PP2C family. Requires Mg(2+) as cofactor. It depends on Mn(2+) as a cofactor.

The catalysed reaction is O-phospho-L-seryl-[protein] + H2O = L-seryl-[protein] + phosphate. The enzyme catalyses O-phospho-L-threonyl-[protein] + H2O = L-threonyl-[protein] + phosphate. This chain is Probable protein phosphatase 2C 39, found in Arabidopsis thaliana (Mouse-ear cress).